We begin with the raw amino-acid sequence, 278 residues long: Large ribosomal subunit protein uL2 (278 aa).

Residues 211 to 278 (KRWLGKRPQS…LIIRRRKGSK (68 aa)) are disordered. The span at 258 to 270 (KTRDTKKASEKLI) shows a compositional bias: basic and acidic residues.

This sequence belongs to the universal ribosomal protein uL2 family. In terms of assembly, part of the 50S ribosomal subunit. Forms a bridge to the 30S subunit in the 70S ribosome.

In terms of biological role, one of the primary rRNA binding proteins. Required for association of the 30S and 50S subunits to form the 70S ribosome, for tRNA binding and peptide bond formation. It has been suggested to have peptidyltransferase activity; this is somewhat controversial. Makes several contacts with the 16S rRNA in the 70S ribosome. The protein is Large ribosomal subunit protein uL2 of Lactobacillus helveticus (strain DPC 4571).